Reading from the N-terminus, the 582-residue chain is MEYTKLAQLYQILEETTSRIKMTQALVDLFKETPPELIDKVVYLSIGRIAPEYTGLDYNFSEKSAIKALSTVLNISEHDIQHQVLQTGDLGDAGKKLYEEKGVKPEGILTVEEVYRTLREIAQTTGYGSTKKKLQLFTELLKKASPLEVKYLLRTITERLRLGIGDNTIMDALSIAFTGKKENREIIERAYNISSDLGYVARILAEKGLDAVKNIKIEIGRPIRPMLAERMAIPSYILKKLGGKAGAEYKYDGERIQVHRKGDTFYLFSRRLENITDQFPDLIEFLKESIPEECIIELEAVVIDPSSGAIRPFQDLMNRRVKYVTRFHIMMYPIAGFIFDIMYLNGEDLTLKPYPERRKILEENIKITERINLSERKIVDNVEDLESFFHQAIEDGCEGLVCKSLQKDSIYQAGKRGFLWIKYKRDYKSHLADTLDLVVVGAFYGKGARTGYFGSLLMACYDPETDQFKTVCKVGTGFKEDDFKKLDDLLKEHTLDHKHPRVNSILSADIWYEPFLVLEITGAELTLSPVHTCGWDRIKINRGLGLRFPRFTGRYRFDKRPEDATTEEEIINMYKNQIQIKS.

Glu-248 contributes to the ATP binding site. Lys-250 serves as the catalytic N6-AMP-lysine intermediate. ATP is bound by residues Arg-255, Arg-270, Glu-299, Phe-339, Arg-416, and Lys-422.

This sequence belongs to the ATP-dependent DNA ligase family. Requires Mg(2+) as cofactor.

It catalyses the reaction ATP + (deoxyribonucleotide)n-3'-hydroxyl + 5'-phospho-(deoxyribonucleotide)m = (deoxyribonucleotide)n+m + AMP + diphosphate.. In terms of biological role, DNA ligase that seals nicks in double-stranded DNA during DNA replication, DNA recombination and DNA repair. The sequence is that of Probable DNA ligase from Persephonella marina (strain DSM 14350 / EX-H1).